A 127-amino-acid chain; its full sequence is Fluoride-specific ion channel FluC (127 aa).

4 helical membrane-spanning segments follow: residues 8–28, 37–57, 68–88, and 100–120; these read LLIA…QYWF, PWGT…VYAI, WKFL…TFSY, and ILFL…AFAG. Positions 78 and 81 each coordinate Na(+).

The protein belongs to the fluoride channel Fluc/FEX (TC 1.A.43) family.

It is found in the cell inner membrane. The catalysed reaction is fluoride(in) = fluoride(out). With respect to regulation, na(+) is not transported, but it plays an essential structural role and its presence is essential for fluoride channel function. In terms of biological role, fluoride-specific ion channel. Important for reducing fluoride concentration in the cell, thus reducing its toxicity. This Leptospira interrogans serogroup Icterohaemorrhagiae serovar copenhageni (strain Fiocruz L1-130) protein is Fluoride-specific ion channel FluC.